A 646-amino-acid chain; its full sequence is UvrABC system protein B (646 aa).

A Helicase ATP-binding domain is found at 25-412 (NGIKAGMREQ…QNIVEQIIRP (388 aa)). An ATP-binding site is contributed by 38–45 (GVTGSGKT). A Beta-hairpin motif is present at residues 91–114 (YYDFYQPEAYIPQTDTYIDKEASI). The region spanning 428 to 594 (QVDDLLSEIR…STRRTLREEE (167 aa)) is the Helicase C-terminal domain. The region spanning 611–646 (ELIIKDLEAEMRDAARNLEFERAARIRDRIMSLKSN) is the UVR domain.

This sequence belongs to the UvrB family. In terms of assembly, forms a heterotetramer with UvrA during the search for lesions. Interacts with UvrC in an incision complex.

The protein resides in the cytoplasm. In terms of biological role, the UvrABC repair system catalyzes the recognition and processing of DNA lesions. A damage recognition complex composed of 2 UvrA and 2 UvrB subunits scans DNA for abnormalities. Upon binding of the UvrA(2)B(2) complex to a putative damaged site, the DNA wraps around one UvrB monomer. DNA wrap is dependent on ATP binding by UvrB and probably causes local melting of the DNA helix, facilitating insertion of UvrB beta-hairpin between the DNA strands. Then UvrB probes one DNA strand for the presence of a lesion. If a lesion is found the UvrA subunits dissociate and the UvrB-DNA preincision complex is formed. This complex is subsequently bound by UvrC and the second UvrB is released. If no lesion is found, the DNA wraps around the other UvrB subunit that will check the other stand for damage. This Methanothermobacter thermautotrophicus (strain ATCC 29096 / DSM 1053 / JCM 10044 / NBRC 100330 / Delta H) (Methanobacterium thermoautotrophicum) protein is UvrABC system protein B.